Reading from the N-terminus, the 172-residue chain is Putative F-box protein At3g13825 (172 aa).

The 51-residue stretch at 1-51 (MTTLSNLSVDLVGEIFSRVPLISLSEVRCTCTTWNTLSWNILSENYVFGKA) folds into the F-box domain.

This chain is Putative F-box protein At3g13825, found in Arabidopsis thaliana (Mouse-ear cress).